The primary structure comprises 1399 residues: MNQEVMNLFNPTTPAQVFDQIRISIASPEKILSWSYGEIKKPETINYRTFKPERDGLFCARIFGPIKDYECLCGKYKRMKYKGIICEKCSVEVTLSRVRRERMGHIELAAPVAHIWFLKSLPSRIGLLLDMTLKDLERILYFEYYVVLEPGLTALKDRQLLSEEEYLRAQDEYGQDSFTAMIGAEAIRELLKGLELERLEAELRAEMQATESDIKHKKLAKRLKIVEAFRFSGNKPEWMILTVVPVIPPDLRPLVPLDGGRFATSDLNDLYRRVINRNNRLKRLMELRAPDIIIRNEKRMLQEAVDALFDNGRRGRVITGANKRPLKSLADMLKGKQGRFRQNLLGKRVDYSGRSVIVVGPELKLHQCGLPKKMALELFKPFIYSRLDAKGLSTTVKQAKKLVEKERPEVWDILDEVIREHPVLLNRAPTLHRLGIQAFEPTLIEGKAIQLHPLVCAAFNADFDGDQMAVHVPLSLEAQLEARVLMMSTNNILHPANGQPIIVPSQDIVLGLYYLSIMREGLPGEGKVFGDMAELEHALHSGVIHLHTSIKYRWDQTDENGEPIKRLIDTTAGRVMLGQVLPKSQKISFDAINKLMTKREISGVIDQVYRHCGQKETVIFCDRIMALGFYNAFKAGISFGKDDMVVPHGKWKIVDTTRALAKDFEQQYNDGLITHGEKYNKVVDAWSKATEEIAKEMMKEISSTKKDAKGIEAQINSIYMMAHSGARGSPAQMRQLAGMRGLMAKPSGEIIETPIISNFKEGLSVLEYFNSTHGARKGLADTALKTANSGYLTRRLVDVAQDCIITQDDCGTKLGIKMRAIVDAGTVVASLGSRILGRTACEDIRNPASNEVLIERNTLMEESHVDQISKAGIQEVKIRSALTCELINGICGKCYGRDLARGTPVNHGEAVGVIAAQSIGEPGTQLTMRTFHIGGAAQINEQSVIESNFDGKITIRNKAIARNGEGHLVAMVRNMVVAVVDADGTERATHRIQYGARMHVDEGDMVKRGQRIAEWDPYTRPVLTELEGTIGFEDLIEGQSISETLDESTGIAKRIVIDWRGTRGGADLRPAIVIKGKDGKVLKLPRGGDARYMLSVDAILSVDVGAKVKPGDILARISTESAKTRDITGGLPRVAELFEARRPKDAAIIAEIAGTIRFGRDYKNKRRISIEPVDQEEETREYLIPKGKHIHLQDGDIVEKGDFIVDGNPAPHDILAIKGIEELAAYLVNEIQEVYRLQGVLINDKHIEVIVRQMLQKVEIIDQGETDMISGEQIDKIEFDRLNLKAQEEGKKIATGTPVLLGITKASLQTRSFFSAASFQETTRVLTEAAVNGKVDPLEGLKENVIVGRLIPAGTGASMAKIREVAVKRDRLILDEREKQAAIVPSAPEAEPLALPPAE.

Zn(2+) contacts are provided by Cys71, Cys73, Cys86, and Cys89. Mg(2+) contacts are provided by Asp462, Asp464, and Asp466. 4 residues coordinate Zn(2+): Cys810, Cys884, Cys891, and Cys894.

This sequence belongs to the RNA polymerase beta' chain family. As to quaternary structure, the RNAP catalytic core consists of 2 alpha, 1 beta, 1 beta' and 1 omega subunit. When a sigma factor is associated with the core the holoenzyme is formed, which can initiate transcription. The cofactor is Mg(2+). Zn(2+) is required as a cofactor.

The catalysed reaction is RNA(n) + a ribonucleoside 5'-triphosphate = RNA(n+1) + diphosphate. Its function is as follows. DNA-dependent RNA polymerase catalyzes the transcription of DNA into RNA using the four ribonucleoside triphosphates as substrates. This Nitrobacter winogradskyi (strain ATCC 25391 / DSM 10237 / CIP 104748 / NCIMB 11846 / Nb-255) protein is DNA-directed RNA polymerase subunit beta'.